The following is a 308-amino-acid chain: HPr kinase/phosphorylase (308 aa).

Active-site residues include His-138 and Lys-159. 153-160 is a binding site for ATP; the sequence is GESGLGKS. Ser-160 lines the Mg(2+) pocket. The active-site Proton acceptor; for phosphorylation activity. Proton donor; for dephosphorylation activity is Asp-177. The interval 201–210 is important for the catalytic mechanism of both phosphorylation and dephosphorylation; that stretch reads LEVRGLGLLD. Glu-202 contributes to the Mg(2+) binding site. The active site involves Arg-243. Positions 264–269 are important for the catalytic mechanism of dephosphorylation; the sequence is QVAAGR.

The protein belongs to the HPrK/P family. As to quaternary structure, homohexamer. Mg(2+) is required as a cofactor.

The catalysed reaction is [HPr protein]-L-serine + ATP = [HPr protein]-O-phospho-L-serine + ADP + H(+). The enzyme catalyses [HPr protein]-O-phospho-L-serine + phosphate + H(+) = [HPr protein]-L-serine + diphosphate. Functionally, catalyzes the ATP- as well as the pyrophosphate-dependent phosphorylation of a specific serine residue in HPr, a phosphocarrier protein of the phosphoenolpyruvate-dependent sugar phosphotransferase system (PTS). HprK/P also catalyzes the pyrophosphate-producing, inorganic phosphate-dependent dephosphorylation (phosphorolysis) of seryl-phosphorylated HPr (P-Ser-HPr). This is HPr kinase/phosphorylase from Bordetella bronchiseptica (strain ATCC BAA-588 / NCTC 13252 / RB50) (Alcaligenes bronchisepticus).